A 310-amino-acid chain; its full sequence is tRNA-cytidine(32) 2-sulfurtransferase (310 aa).

A PP-loop motif motif is present at residues 44 to 49 (SGGKDS). The [4Fe-4S] cluster site is built by Cys119, Cys122, and Cys210.

Belongs to the TtcA family. As to quaternary structure, homodimer. Mg(2+) is required as a cofactor. The cofactor is [4Fe-4S] cluster.

It is found in the cytoplasm. It carries out the reaction cytidine(32) in tRNA + S-sulfanyl-L-cysteinyl-[cysteine desulfurase] + AH2 + ATP = 2-thiocytidine(32) in tRNA + L-cysteinyl-[cysteine desulfurase] + A + AMP + diphosphate + H(+). The protein operates within tRNA modification. Its function is as follows. Catalyzes the ATP-dependent 2-thiolation of cytidine in position 32 of tRNA, to form 2-thiocytidine (s(2)C32). The sulfur atoms are provided by the cysteine/cysteine desulfurase (IscS) system. The protein is tRNA-cytidine(32) 2-sulfurtransferase of Saccharophagus degradans (strain 2-40 / ATCC 43961 / DSM 17024).